A 274-amino-acid chain; its full sequence is 4-diphosphocytidyl-2-C-methyl-D-erythritol kinase (274 aa).

The active site involves K8. Position 92 to 102 (92 to 102) interacts with ATP; that stretch reads PSGAGLGGGSS. Residue D134 is part of the active site.

It belongs to the GHMP kinase family. IspE subfamily.

The enzyme catalyses 4-CDP-2-C-methyl-D-erythritol + ATP = 4-CDP-2-C-methyl-D-erythritol 2-phosphate + ADP + H(+). Its pathway is isoprenoid biosynthesis; isopentenyl diphosphate biosynthesis via DXP pathway; isopentenyl diphosphate from 1-deoxy-D-xylulose 5-phosphate: step 3/6. Functionally, catalyzes the phosphorylation of the position 2 hydroxy group of 4-diphosphocytidyl-2C-methyl-D-erythritol. The chain is 4-diphosphocytidyl-2-C-methyl-D-erythritol kinase from Porphyromonas gingivalis (strain ATCC 33277 / DSM 20709 / CIP 103683 / JCM 12257 / NCTC 11834 / 2561).